Consider the following 367-residue polypeptide: Alanine racemase (367 aa).

The active-site Proton acceptor; specific for D-alanine is the Lys-40. Lys-40 carries the N6-(pyridoxal phosphate)lysine modification. Arg-136 lines the substrate pocket. Catalysis depends on Tyr-263, which acts as the Proton acceptor; specific for L-alanine. Substrate is bound at residue Met-310.

Belongs to the alanine racemase family. Pyridoxal 5'-phosphate is required as a cofactor.

The catalysed reaction is L-alanine = D-alanine. It participates in amino-acid biosynthesis; D-alanine biosynthesis; D-alanine from L-alanine: step 1/1. Catalyzes the interconversion of L-alanine and D-alanine. May also act on other amino acids. This is Alanine racemase (alr) from Lactococcus lactis subsp. cremoris (strain MG1363).